The primary structure comprises 471 residues: Exoglucanase 2 (471 aa).

The first 18 residues, 1–18, serve as a signal peptide directing secretion; sequence MIVGILTTLATLATLAAS. The propeptide occupies 19–24; that stretch reads VPLEER. A Pyrrolidone carboxylic acid modification is found at Gln25. The CBM1 domain occupies 26 to 62; it reads ACSSVWGQCGGQNWSGPTCCASGSTCVYSNDYYSQCL. Over residues 64–101 the composition is skewed to low complexity; sequence GAASSSSSTRAASTTSRVSPTTSRSSSATPPPGSTTTR. Residues 64–108 are disordered; that stretch reads GAASSSSSTRAASTTSRVSPTTSRSSSATPPPGSTTTRVPPVGSG. Residues 66–106 form a linker region; the sequence is ASSSSSTRAASTTSRVSPTTSRSSSATPPPGSTTTRVPPVG. Positions 107-471 are catalytic; that stretch reads SGTATYSGNP…LLTNANPSFL (365 aa). 2 O-linked (Man...) threonine glycosylation sites follow: Thr111 and Thr121. O-linked (Man...) serine glycans are attached at residues Ser130, Ser133, Ser134, and Ser139. An O-linked (Man...) threonine glycan is attached at Thr146. Cys200 and Cys259 are joined by a disulfide. Asp245 (proton donor) is an active-site residue. The N-linked (GlcNAc) asparagine glycan is linked to Asn313. N-linked (GlcNAc...) (high mannose) asparagine glycosylation occurs at Asn334. Cys392 and Cys439 are disulfide-bonded.

It belongs to the glycosyl hydrolase 6 (cellulase B) family. In terms of processing, asn-334 contains mainly a high-mannose-type glycan (Hex(7-9)GlcNAc(2)) in a 3:1 ration with a single GlcNAc. Asn-313 was primarily unglycosylated with a small fraction (18%) bearing a single GlcNAc at this site.

It localises to the secreted. The enzyme catalyses Hydrolysis of (1-&gt;4)-beta-D-glucosidic linkages in cellulose and cellotetraose, releasing cellobiose from the non-reducing ends of the chains.. Exocellobiohydrolases (CBH) that catalyzes the hydrolysis of 1,4-beta-D-glucosidic bonds in cellulose to release the disaccharide cellobiose. The degradation of cellulose involves an interplay between different cellulolytic enzymes. Hydrolysis starts with endoglucanases (EGs), which cut internal beta-1,4-glucosidic bonds in cellulose to reduce the polymerization degree of the substrate and create new chain ends for exocellobiohydrolases (CBHs). The CBHs release the disaccharide cellobiose from the non-reducing end of the cellulose polymer chain. Finally, beta-1,4-glucosidases hydrolyze the cellobiose and other short cello-oligosaccharides into glucose units. This is Exoglucanase 2 (cbh2) from Hypocrea jecorina (Trichoderma reesei).